The following is a 172-amino-acid chain: 3-hydroxydecanoyl-[acyl-carrier-protein] dehydratase (172 aa).

The active site involves histidine 70.

This sequence belongs to the thioester dehydratase family. FabA subfamily. Homodimer.

Its subcellular location is the cytoplasm. It catalyses the reaction a (3R)-hydroxyacyl-[ACP] = a (2E)-enoyl-[ACP] + H2O. It carries out the reaction (3R)-hydroxydecanoyl-[ACP] = (2E)-decenoyl-[ACP] + H2O. The enzyme catalyses (2E)-decenoyl-[ACP] = (3Z)-decenoyl-[ACP]. Its pathway is lipid metabolism; fatty acid biosynthesis. Functionally, necessary for the introduction of cis unsaturation into fatty acids. Catalyzes the dehydration of (3R)-3-hydroxydecanoyl-ACP to E-(2)-decenoyl-ACP and then its isomerization to Z-(3)-decenoyl-ACP. Can catalyze the dehydratase reaction for beta-hydroxyacyl-ACPs with saturated chain lengths up to 16:0, being most active on intermediate chain length. The polypeptide is 3-hydroxydecanoyl-[acyl-carrier-protein] dehydratase (Xylella fastidiosa (strain M12)).